We begin with the raw amino-acid sequence, 191 residues long: Calcium-binding protein CML42 (191 aa).

EF-hand domains are found at residues 25–60, 116–151, and 154–189; these read LNALRLQRIFDLFDKNGDGFITVEELSQALTRLGLN, ENESDLAEAFKVFDENGDGFISARELQTVLKKLGLP, and GEMERVEKMIVSVDRNQDGRVDFFEFKNMMRTVVIP. Ca(2+)-binding residues include D38, N40, D42, E49, D129, N131, D133, E140, D167, N169, D171, R173, and E178.

Interacts with KIC. In terms of tissue distribution, expressed in seedling shoots, roots, rosette leaves and flowers. Expressed in the leaf trichome support cells.

Functionally, probable calcium sensor that binds calcium in vitro. Involved in the regulation of trichome branching. This chain is Calcium-binding protein CML42 (CML42), found in Arabidopsis thaliana (Mouse-ear cress).